The chain runs to 506 residues: 2-isopropylmalate synthase (506 aa).

The Pyruvate carboxyltransferase domain maps to Ile4–Lys266. Mn(2+) contacts are provided by Asp13, His201, His203, and Asn237. The tract at residues Asn390 to Lys506 is regulatory domain.

It belongs to the alpha-IPM synthase/homocitrate synthase family. LeuA type 1 subfamily. In terms of assembly, homodimer. Mn(2+) serves as cofactor.

Its subcellular location is the cytoplasm. It carries out the reaction 3-methyl-2-oxobutanoate + acetyl-CoA + H2O = (2S)-2-isopropylmalate + CoA + H(+). It participates in amino-acid biosynthesis; L-leucine biosynthesis; L-leucine from 3-methyl-2-oxobutanoate: step 1/4. Its function is as follows. Catalyzes the condensation of the acetyl group of acetyl-CoA with 3-methyl-2-oxobutanoate (2-ketoisovalerate) to form 3-carboxy-3-hydroxy-4-methylpentanoate (2-isopropylmalate). In Bacillus anthracis (strain A0248), this protein is 2-isopropylmalate synthase.